The following is a 270-amino-acid chain: Probable feruloyl esterase C (270 aa).

The signal sequence occupies residues 1 to 22; it reads MAILSRLLTTVTLGSLLTSAVA.

Belongs to the faeC family.

It localises to the secreted. The enzyme catalyses feruloyl-polysaccharide + H2O = ferulate + polysaccharide.. In terms of biological role, involved in degradation of plant cell walls. Hydrolyzes the feruloyl-arabinose ester bond in arabinoxylans, and the feruloyl-galactose ester bond in pectin. Active against paranitrophenyl-acetate, methyl ferulate and wheat arabinoxylan. The polypeptide is Probable feruloyl esterase C (faeC) (Aspergillus terreus (strain NIH 2624 / FGSC A1156)).